Reading from the N-terminus, the 344-residue chain is UDP-3-O-acylglucosamine N-acyltransferase (344 aa).

Histidine 250 functions as the Proton acceptor in the catalytic mechanism.

The protein belongs to the transferase hexapeptide repeat family. LpxD subfamily. Homotrimer.

The catalysed reaction is a UDP-3-O-[(3R)-3-hydroxyacyl]-alpha-D-glucosamine + a (3R)-hydroxyacyl-[ACP] = a UDP-2-N,3-O-bis[(3R)-3-hydroxyacyl]-alpha-D-glucosamine + holo-[ACP] + H(+). It participates in bacterial outer membrane biogenesis; LPS lipid A biosynthesis. In terms of biological role, catalyzes the N-acylation of UDP-3-O-acylglucosamine using 3-hydroxyacyl-ACP as the acyl donor. Is involved in the biosynthesis of lipid A, a phosphorylated glycolipid that anchors the lipopolysaccharide to the outer membrane of the cell. This Maricaulis maris (strain MCS10) (Caulobacter maris) protein is UDP-3-O-acylglucosamine N-acyltransferase.